Consider the following 1174-residue polypeptide: Carboxylic acid reductase (1174 aa).

AMP contacts are provided by residues His297, Ser392, 413–414 (EG), Thr418, Asp491, 503–506 (YLDR), Lys512, and Lys612. A Carrier domain is found at 651–726 (APVLVTVCRA…ALADYVEAAR (76 aa)). Position 685 is an O-(pantetheine 4'-phosphoryl)serine (Ser685). Residues 787–791 (TGFLG), Arg814, Arg824, 854–855 (DK), 880–882 (PAA), 919–920 (TS), Tyr956, and Lys960 contribute to the NADP(+) site.

The protein belongs to the ATP-dependent AMP-binding enzyme family. Carboxylic acid reductase subfamily. It depends on pantetheine 4'-phosphate as a cofactor.

It carries out the reaction a carboxylate + ATP + NADPH + H(+) = an aldehyde + AMP + diphosphate + NADP(+). Catalyzes the ATP- and NADPH-dependent reduction of carboxylic acids to the corresponding aldehydes. Catalyzes the reduction of a wide range of aliphatic fatty acids (C6-C18) into their corresponding aldehydes. Can also reduce benzoate to benzaldehyde. Has a preference for NADPH over NADH as the electron donor. This chain is Carboxylic acid reductase, found in Mycobacterium marinum (strain ATCC BAA-535 / M).